The primary structure comprises 605 residues: F-box/WD repeat-containing protein pof1 (605 aa).

Positions 107-153 (LDFLSLLPVEISFRILSFLDARSLCQAAQVSKHWKELADDDVIWHRM) constitute an F-box domain. Positions 195–212 (GVDQAHESSPVKKAKLDD) are enriched in basic and acidic residues. The disordered stretch occupies residues 195 to 231 (GVDQAHESSPVKKAKLDDYPTSSNEETISSVKPPSPN). The segment covering 214–231 (PTSSNEETISSVKPPSPN) has biased composition (polar residues). 2 positions are modified to phosphoserine: Ser-229 and Ser-232. 7 WD repeats span residues 271-299 (GHSDGVMCLQLVRNILASGSYDATIRLWN), 311-339 (GHSSGVTCLQFDQCKLISGSMDKTIRIWN), 350-379 (HGHTDSVLCLTFDSTLLVSGSADCTVKLWH), 390-420 (GHTGPVNSVRIIRDRGLVLSGSDDSTIKIWS), 432-460 (AHIGPVQSLALADSRLFSCSLDGTIKQWD), 472-500 (GHIEGVWEIAADHLRLISGAHDGVVKVWE), and 510-538 (NHSEPVTSVALGDCEVVSGSEDGKIYLWL).

A part of the E3 ubiquitin ligase Skp1-Cullin-1-F-box (SCF) complex. Interacts with cul1, skp1 and phosphorylated zip1.

It localises to the nucleus. Probably recognizes and binds to some phosphorylated proteins and promotes their ubiquitination and degradation. Required for the inactivation of zip1 via ubiquitination. The chain is F-box/WD repeat-containing protein pof1 (pof1) from Schizosaccharomyces pombe (strain 972 / ATCC 24843) (Fission yeast).